We begin with the raw amino-acid sequence, 357 residues long: 3-dehydroquinate synthase (357 aa).

NAD(+) contacts are provided by residues 104–108, 128–129, Lys-141, and 168–171; these read GVVGD, TT, and FLET. Positions 183, 243, and 260 each coordinate Zn(2+).

The protein belongs to the sugar phosphate cyclases superfamily. Dehydroquinate synthase family. Co(2+) serves as cofactor. Zn(2+) is required as a cofactor. Requires NAD(+) as cofactor.

The protein localises to the cytoplasm. The enzyme catalyses 7-phospho-2-dehydro-3-deoxy-D-arabino-heptonate = 3-dehydroquinate + phosphate. It functions in the pathway metabolic intermediate biosynthesis; chorismate biosynthesis; chorismate from D-erythrose 4-phosphate and phosphoenolpyruvate: step 2/7. Its function is as follows. Catalyzes the conversion of 3-deoxy-D-arabino-heptulosonate 7-phosphate (DAHP) to dehydroquinate (DHQ). This chain is 3-dehydroquinate synthase, found in Streptococcus pyogenes serotype M49 (strain NZ131).